Here is a 432-residue protein sequence, read N- to C-terminus: Crenactin (432 aa).

ATP-binding positions include 20–24, 182–184, 235–239, 354–358, and Q399; these read TSYVK, GGH, EVVKR, and GAFSW.

This sequence belongs to the actin family. As to quaternary structure, monomer. The crenactin monomers polymerize into right-handed helical filaments, with 8 subunits per complete turn of the helix. Forms single-stranded filaments under high salt concentrations and double-stranded filaments under low salt concentrations. Interacts with arcadin-1 and arcadin-2.

The protein localises to the cytoplasm. Its subcellular location is the cytoskeleton. The enzyme catalyses ATP + H2O = ADP + phosphate + H(+). With respect to regulation, crenactin polymerization is inhibited by interaction with arcadin-2. Also significantly inhibited by elevated antibiotic A22 concentrations. In terms of biological role, forms the backbone of an actin-like archaeal cytoskeleton, which is involved in cell shape determination. Has ATPase activity. Shows highest activity towards ATP or GTP as nucleotide, and only residual activity on UTP, CTP and dNTPs. The sequence is that of Crenactin from Pyrobaculum calidifontis (strain DSM 21063 / JCM 11548 / VA1).